A 79-amino-acid chain; its full sequence is Conotoxin VnMEKL-024 (79 aa).

The signal sequence occupies residues 1-19 (MQKLTILLLVAAVLMSTQA). Residues 20–50 (LIRGGVEKRQEAKRNFFSKRKTTAESWWEGE) constitute a propeptide that is removed on maturation. 3 disulfide bridges follow: cysteine 51-cysteine 65, cysteine 58-cysteine 69, and cysteine 64-cysteine 76.

It belongs to the conotoxin O2 superfamily. Expressed by the venom duct.

The protein resides in the secreted. The chain is Conotoxin VnMEKL-024 from Conus ventricosus (Mediterranean cone).